Reading from the N-terminus, the 212-residue chain is Riboflavin kinase (212 aa).

An H-T-H motif-like region spans residues 1–87 (MKMKTLFLLI…YEEISTALYS (87 aa)). The riboflavin kinase stretch occupies residues 88–212 (GFIVGEVISG…DGDKVRIEVV (125 aa)). 97-102 (GIGEGA) serves as a coordination point for CDP. Mg(2+)-binding residues include Thr-124 and Asn-126. Positions 180 and 188 each coordinate FMN. 193-196 (VKLR) contacts CDP.

Belongs to the archaeal riboflavin kinase family. Mg(2+) serves as cofactor.

It catalyses the reaction riboflavin + CTP = CDP + FMN + H(+). It participates in cofactor biosynthesis; FMN biosynthesis; FMN from riboflavin (CTP route): step 1/1. Functionally, catalyzes the CTP-dependent phosphorylation of riboflavin (vitamin B2) to form flavin mononucleotide (FMN). The protein is Riboflavin kinase (ribK) of Pyrococcus abyssi (strain GE5 / Orsay).